The primary structure comprises 700 residues: Polyribonucleotide nucleotidyltransferase (700 aa).

Residues D484 and D490 each contribute to the Mg(2+) site. The KH domain occupies 551–610 (PRVIRMVVDPEKIREIIGPGGKTISKIIAETGVKIDIEEDGRLYITASDLRSGERAKQMI). The S1 motif domain maps to 620-688 (GEIYLGKVLR…KLGRISLSRK (69 aa)).

Belongs to the polyribonucleotide nucleotidyltransferase family. The cofactor is Mg(2+).

The protein localises to the cytoplasm. The catalysed reaction is RNA(n+1) + phosphate = RNA(n) + a ribonucleoside 5'-diphosphate. Involved in mRNA degradation. Catalyzes the phosphorolysis of single-stranded polyribonucleotides processively in the 3'- to 5'-direction. The polypeptide is Polyribonucleotide nucleotidyltransferase (Thermoanaerobacter pseudethanolicus (strain ATCC 33223 / 39E) (Clostridium thermohydrosulfuricum)).